Here is a 387-residue protein sequence, read N- to C-terminus: Protein-glutamate methylesterase/protein-glutamine glutaminase 2 (387 aa).

In terms of domain architecture, Response regulatory spans 4 to 121 (KVLVVDDSGF…SRNPQKVKQL (118 aa)). The residue at position 55 (Asp-55) is a 4-aspartylphosphate. The segment covering 148–183 (AAPAAPTSSSRAPAPTTAPARAVPTRTAAPATAPAA) has biased composition (low complexity). Positions 148 to 199 (AAPAAPTSSSRAPAPTTAPARAVPTRTAAPATAPAAHAHHAPAHPTTSGTPK) are disordered. The CheB-type methylesterase domain maps to 192–384 (PTTSGTPKRK…LDDIGRHLVE (193 aa)). Catalysis depends on residues Ser-211, His-238, and Asp-331.

Belongs to the CheB family. Phosphorylated by CheA. Phosphorylation of the N-terminal regulatory domain activates the methylesterase activity.

The protein localises to the cytoplasm. The catalysed reaction is [protein]-L-glutamate 5-O-methyl ester + H2O = L-glutamyl-[protein] + methanol + H(+). The enzyme catalyses L-glutaminyl-[protein] + H2O = L-glutamyl-[protein] + NH4(+). Its function is as follows. Involved in chemotaxis. Part of a chemotaxis signal transduction system that modulates chemotaxis in response to various stimuli. Catalyzes the demethylation of specific methylglutamate residues introduced into the chemoreceptors (methyl-accepting chemotaxis proteins or MCP) by CheR. Also mediates the irreversible deamidation of specific glutamine residues to glutamic acid. This is Protein-glutamate methylesterase/protein-glutamine glutaminase 2 from Pseudomonas savastanoi pv. phaseolicola (strain 1448A / Race 6) (Pseudomonas syringae pv. phaseolicola (strain 1448A / Race 6)).